We begin with the raw amino-acid sequence, 1100 residues long: Regulator of nonsense transcripts 1 (1100 aa).

A compositionally biased stretch (low complexity) spans 42 to 53; sequence SQTQTQGQTQSQ. The interval 42-67 is disordered; that stretch reads SQTQTQGQTQSQLDNQVNGPDGVLPN. Residues 94–251 form the Upf1 CH-rich domain; that stretch reads TKDLPVHACS…NKLEELWKEN (158 aa). Cys-102, Cys-105, Cys-116, Ser-119, Cys-124, His-134, His-138, Cys-144, Cys-162, Cys-165, Cys-188, and Cys-192 together coordinate Zn(2+). The tract at residues 102–134 is C3H; that stretch reads CSYCGIHDPACVVYCNTSKKWFCNGRGNTSGSH. A CC/SHH/C region spans residues 116–144; that stretch reads CNTSKKWFCNGRGNTSGSHIVNHLVRAKC. Residues 162–192 are C4; that stretch reads CYNCGCRNVFLLGFIPAKADSVVVLLCRQPC. Residues Gln-455, 475-479, Gln-645, Tyr-682, and Glu-813 each bind ATP; that span reads GTGKT. Residues 978–1065 form a disordered region; it reads LGQVNGPAAG…QPELSQDSYL (88 aa). The span at 982–993 shows a compositional bias: low complexity; sequence NGPAAGRGAPKG. Residues 1012–1063 are compositionally biased toward polar residues; the sequence is SGQPNMPNSQASQDLVSQPFSQGPLTQGYITMSQPSQMSQPGLSQPELSQDS.

This sequence belongs to the DNA2/NAM7 helicase family.

Its subcellular location is the cytoplasm. It is found in the P-body. The protein localises to the nucleus. The protein resides in the perinuclear region. RNA-dependent helicase and ATPase required for nonsense-mediated decay (NMD) of mRNAs containing premature stop codons. Is recruited to mRNAs upon translation termination and undergoes a cycle of phosphorylation and dephosphorylation; its phosphorylation appears to be a key step in NMD. The formation of an upf1-upf2-upf3 surveillance complex is believed to activate NMD. In Danio rerio (Zebrafish), this protein is Regulator of nonsense transcripts 1.